Reading from the N-terminus, the 554-residue chain is Undecaprenyl phosphate-alpha-4-amino-4-deoxy-L-arabinose arabinosyl transferase (554 aa).

Transmembrane regions (helical) follow at residues 4–24 (LKDS…LLPV), 87–107 (FGSI…ATLL), 115–135 (VLAT…TYAV), 178–198 (FMTK…PIVI), 206–226 (LVVF…PWAL), 262–282 (YLPI…GALF), 293–313 (ELFF…VAKG), 315–335 (LPTY…AYAT), 351–371 (VINL…GLGL), 384–404 (QKVW…FITL), and 414–434 (AAAC…QQVV).

This sequence belongs to the glycosyltransferase 83 family.

It localises to the cell inner membrane. It catalyses the reaction 4-amino-4-deoxy-alpha-L-arabinopyranosyl di-trans,octa-cis-undecaprenyl phosphate + lipid IVA = lipid IIA + di-trans,octa-cis-undecaprenyl phosphate.. It functions in the pathway lipopolysaccharide metabolism; 4-amino-4-deoxy-beta-L-arabinose-lipid A biosynthesis. Catalyzes the transfer of the L-Ara4N moiety of the glycolipid undecaprenyl phosphate-alpha-L-Ara4N to lipid A. The modified arabinose is attached to lipid A and is required for resistance to polymyxin and cationic antimicrobial peptides. This Yersinia pseudotuberculosis serotype O:3 (strain YPIII) protein is Undecaprenyl phosphate-alpha-4-amino-4-deoxy-L-arabinose arabinosyl transferase.